A 198-amino-acid polypeptide reads, in one-letter code: Glutamyl-tRNA(Gln) amidotransferase subunit C, mitochondrial (198 aa).

Belongs to the GatC family. In terms of assembly, subunit of the heterotrimeric GatCAB amidotransferase (AdT) complex, composed of A, B and C subunits.

It localises to the mitochondrion. The catalysed reaction is L-glutamyl-tRNA(Gln) + L-glutamine + ATP + H2O = L-glutaminyl-tRNA(Gln) + L-glutamate + ADP + phosphate + H(+). Functionally, allows the formation of correctly charged Gln-tRNA(Gln) through the transamidation of misacylated Glu-tRNA(Gln) in the mitochondria. The reaction takes place in the presence of glutamine and ATP through an activated gamma-phospho-Glu-tRNA(Gln). In Caenorhabditis remanei (Caenorhabditis vulgaris), this protein is Glutamyl-tRNA(Gln) amidotransferase subunit C, mitochondrial.